Here is a 595-residue protein sequence, read N- to C-terminus: uncharacterized protein (595 aa).

The segment at Met-1–Cys-21 is disordered. WD repeat units lie at residues Glu-56–Lys-95, Ala-100–Phe-143, Gly-144–Ser-184, Val-187–Glu-226, Ala-229–Glu-268, Gly-313–Leu-352, Ser-356–Asp-393, Lys-433–Val-472, Asp-477–Ser-516, Phe-520–Ala-559, and His-564–Thr-594.

This sequence belongs to the WD repeat AIP1 family.

This is an uncharacterized protein from Schizosaccharomyces pombe (strain 972 / ATCC 24843) (Fission yeast).